Here is a 383-residue protein sequence, read N- to C-terminus: Acyl-CoA dehydrogenase, short-chain specific (383 aa).

Glutamate 367 (proton acceptor) is an active-site residue.

This sequence belongs to the acyl-CoA dehydrogenase family. As to quaternary structure, homotetramer. The cofactor is FAD.

The enzyme catalyses butanoyl-CoA + oxidized [electron-transfer flavoprotein] + H(+) = (2E)-butenoyl-CoA + reduced [electron-transfer flavoprotein]. The catalysed reaction is a short-chain 2,3-saturated fatty acyl-CoA + oxidized [electron-transfer flavoprotein] + H(+) = a short-chain (2E)-enoyl-CoA + reduced [electron-transfer flavoprotein]. Functionally, has an optimum specificity for 4-carbon length fatty acyl-CoAs. The sequence is that of Acyl-CoA dehydrogenase, short-chain specific from Megasphaera elsdenii.